The sequence spans 78 residues: Acyl carrier protein (78 aa).

The Carrier domain maps to 1–77; sequence MALIDEIKDV…DAAKYIEEHK (77 aa). Residue serine 37 is modified to O-(pantetheine 4'-phosphoryl)serine.

Belongs to the acyl carrier protein (ACP) family. In terms of processing, 4'-phosphopantetheine is transferred from CoA to a specific serine of apo-ACP by AcpS. This modification is essential for activity because fatty acids are bound in thioester linkage to the sulfhydryl of the prosthetic group.

The protein localises to the secreted. Its pathway is lipid metabolism; fatty acid biosynthesis. Carrier of the growing fatty acid chain in fatty acid biosynthesis. Has hemolytic activity forming pores approximately 1 nm in diameter into erythrocytes. Is able to induce murine colonic lesions and to disrupt the integrity of epithelial cell monolayers. The protein is Acyl carrier protein (acpP) of Brachyspira hyodysenteriae (Treponema hyodysenteriae).